The chain runs to 292 residues: Putative OX-2 membrane glycoprotein homolog (292 aa).

Residues 1–18 form the signal peptide; the sequence is MSPLMLRLLPLLCIIISA. Residues 24-136 form the Ig-like V-type domain; it reads PETSPSLVYE…TFTVDNEKTS (113 aa). Cys-42 and Cys-126 form a disulfide bridge. N-linked (GlcNAc...) asparagine; by host glycosylation is found at Asn-45, Asn-57, Asn-72, and Asn-195. The 91-residue stretch at 147 to 237 folds into the Ig-like C2-type domain; it reads PIVVLYFRYL…TNQKASALVT (91 aa). A helical transmembrane segment spans residues 263-283; that stretch reads VFTWIVPLILILIISVMVLLI.

The protein resides in the host membrane. The sequence is that of Putative OX-2 membrane glycoprotein homolog (U85) from Human herpesvirus 6B (strain Z29) (HHV-6 variant B).